The primary structure comprises 131 residues: MPGTKPVELGSLKVGQYIVIDEVPCRIVDMTKSKPGKHGGAKIRLTAMGLFENVKKEHVGPTSSRADVPLIDKRKGQVLSIMGDLVQIMDLETFDTLEIPMPEDVEEIDSGMEVEYFEAVGRYKITRVISK.

At Lys37 the chain carries Hypusine.

The protein belongs to the eIF-5A family.

It localises to the cytoplasm. In terms of biological role, functions by promoting the formation of the first peptide bond. The chain is Translation initiation factor 5A (eIF5A) from Methanococcus aeolicus (strain ATCC BAA-1280 / DSM 17508 / OCM 812 / Nankai-3).